A 1263-amino-acid chain; its full sequence is DNA-directed RNA polymerase subunit beta (1263 aa).

Belongs to the RNA polymerase beta chain family. In terms of assembly, the RNAP catalytic core consists of 2 alpha, 1 beta, 1 beta' and 1 omega subunit. When a sigma factor is associated with the core the holoenzyme is formed, which can initiate transcription.

It carries out the reaction RNA(n) + a ribonucleoside 5'-triphosphate = RNA(n+1) + diphosphate. DNA-dependent RNA polymerase catalyzes the transcription of DNA into RNA using the four ribonucleoside triphosphates as substrates. This Thermotoga maritima (strain ATCC 43589 / DSM 3109 / JCM 10099 / NBRC 100826 / MSB8) protein is DNA-directed RNA polymerase subunit beta.